Reading from the N-terminus, the 130-residue chain is Small ribosomal subunit protein uS11c (130 aa).

This sequence belongs to the universal ribosomal protein uS11 family. As to quaternary structure, part of the 30S ribosomal subunit.

Its subcellular location is the plastid. The protein localises to the chloroplast. This is Small ribosomal subunit protein uS11c from Phaeodactylum tricornutum (strain CCAP 1055/1).